The following is a 293-amino-acid chain: NAD-dependent protein deacetylase (293 aa).

A Deacetylase sirtuin-type domain is found at 1–284 (MTVAITQTGP…QPPDPLHTAT (284 aa)). NAD(+) is bound by residues 27–47 (GAGC…GGWK) and 105–108 (QNVD). Residue His-123 is the Proton acceptor of the active site. 4 residues coordinate Zn(2+): Cys-131, Cys-134, Cys-182, and Cys-185. Residues 222 to 224 (GSS), 248 to 250 (NFG), and Cys-266 contribute to the NAD(+) site.

This sequence belongs to the sirtuin family. Class II subfamily. Zn(2+) is required as a cofactor.

Its subcellular location is the cytoplasm. The enzyme catalyses N(6)-acetyl-L-lysyl-[protein] + NAD(+) + H2O = 2''-O-acetyl-ADP-D-ribose + nicotinamide + L-lysyl-[protein]. Its function is as follows. NAD-dependent protein deacetylase which modulates the activities of several enzymes which are inactive in their acetylated form. The sequence is that of NAD-dependent protein deacetylase from Xanthomonas campestris pv. campestris (strain 8004).